The primary structure comprises 448 residues: MNRALVLLLYVCTVSCLASSKVILMRNNITLSFDDIEANFAPSVKGTGEIGVVYVAEPLDACQNLMNKPEQSSNETSPFVLIVRGGCSFEEKVRKAQRAGFKAAIIYDNEDRGTLIAMAGNSGGIRIHAVFVTKETGEVLKEYAGFPDTKVWLIPSFENSAWSIMAVSFISLLAMSAVLATCFFVRRHRIRRRTSRSSRVREFHGMSRRLVKAMPSLIFSSFHEDNTTAFTCAICLEDYTVGDKLRLLPCCHKFHAACVDSWLTSWRTFCPVCKRDARTSTGEPPASESTPLLSSAASSFTSSSLHSSVRSSALLIGPSLGSLPTSISFSPAYASSSYIRQSFQSSSNRRSPPISVSRSSVDLRQQAASPSPSPSQRSYISHMASPQSLGYPTISPFNTRYMSPYRPSPSNASPAMAGSSNYPLNPLRYSESAGTFSPYASANSLPDC.

The first 20 residues, Met-1–Ser-20, serve as a signal peptide directing secretion. Residues Lys-21–Ser-163 lie on the Lumenal side of the membrane. 2 N-linked (GlcNAc...) asparagine glycosylation sites follow: Asn-28 and Asn-74. The 85-residue stretch at Asp-60–Ala-144 folds into the PA domain. Cys-62 and Cys-87 are joined by a disulfide. The helical transmembrane segment at Ile-164–Phe-184 threads the bilayer. The Cytoplasmic portion of the chain corresponds to Val-185–Cys-448. The RING-type; atypical zinc finger occupies Cys-232–Lys-274. The span at Gln-344–Ser-378 shows a compositional bias: low complexity. Disordered regions lie at residues Gln-344–Ile-380 and Met-402–Leu-424. Polar residues predominate over residues Ser-408–Pro-423.

Its subcellular location is the protein storage vacuole membrane. The protein localises to the golgi apparatus membrane. Functionally, involved in the trafficking of vacuolar proteins. May function as a sorting receptor for protein trafficking to the protein storage vacuole (PSV). This chain is Receptor homology region, transmembrane domain- and RING domain-containing protein 2 (RMR2), found in Arabidopsis thaliana (Mouse-ear cress).